The chain runs to 103 residues: Large ribosomal subunit protein bL21 (103 aa).

The protein belongs to the bacterial ribosomal protein bL21 family. Part of the 50S ribosomal subunit. Contacts protein L20.

Functionally, this protein binds to 23S rRNA in the presence of protein L20. The sequence is that of Large ribosomal subunit protein bL21 from Herminiimonas arsenicoxydans.